The sequence spans 100 residues: Large ribosomal subunit protein bL21 (100 aa).

It belongs to the bacterial ribosomal protein bL21 family. In terms of assembly, part of the 50S ribosomal subunit. Contacts protein L20.

Its function is as follows. This protein binds to 23S rRNA in the presence of protein L20. This Paramagnetospirillum magneticum (strain ATCC 700264 / AMB-1) (Magnetospirillum magneticum) protein is Large ribosomal subunit protein bL21.